We begin with the raw amino-acid sequence, 286 residues long: Ribosomal RNA small subunit methyltransferase A (286 aa).

Residues asparagine 31, isoleucine 33, glycine 58, glutamate 80, aspartate 106, and asparagine 125 each coordinate S-adenosyl-L-methionine.

Belongs to the class I-like SAM-binding methyltransferase superfamily. rRNA adenine N(6)-methyltransferase family. RsmA subfamily.

The protein resides in the cytoplasm. The catalysed reaction is adenosine(1518)/adenosine(1519) in 16S rRNA + 4 S-adenosyl-L-methionine = N(6)-dimethyladenosine(1518)/N(6)-dimethyladenosine(1519) in 16S rRNA + 4 S-adenosyl-L-homocysteine + 4 H(+). Functionally, specifically dimethylates two adjacent adenosines (A1518 and A1519) in the loop of a conserved hairpin near the 3'-end of 16S rRNA in the 30S particle. May play a critical role in biogenesis of 30S subunits. The sequence is that of Ribosomal RNA small subunit methyltransferase A from Wolbachia pipientis wMel.